We begin with the raw amino-acid sequence, 345 residues long: tRNA-dihydrouridine(20/20a) synthase (345 aa).

FMN is bound by residues 26–28 (PML) and Q78. Catalysis depends on C108, which acts as the Proton donor. Residues K147, H180, 220 to 222 (NGG), and 242 to 243 (GR) each bind FMN.

The protein belongs to the Dus family. DusA subfamily. Requires FMN as cofactor.

It carries out the reaction 5,6-dihydrouridine(20) in tRNA + NADP(+) = uridine(20) in tRNA + NADPH + H(+). The enzyme catalyses 5,6-dihydrouridine(20) in tRNA + NAD(+) = uridine(20) in tRNA + NADH + H(+). The catalysed reaction is 5,6-dihydrouridine(20a) in tRNA + NADP(+) = uridine(20a) in tRNA + NADPH + H(+). It catalyses the reaction 5,6-dihydrouridine(20a) in tRNA + NAD(+) = uridine(20a) in tRNA + NADH + H(+). Functionally, catalyzes the synthesis of 5,6-dihydrouridine (D), a modified base found in the D-loop of most tRNAs, via the reduction of the C5-C6 double bond in target uridines. Specifically modifies U20 and U20a in tRNAs. This is tRNA-dihydrouridine(20/20a) synthase from Yersinia pestis.